The sequence spans 213 residues: Probable GTP-binding protein EngB (213 aa).

Positions 25–203 (EGTEVAFAGR…EDVLNGWLLP (179 aa)) constitute an EngB-type G domain. GTP-binding positions include 33-40 (GRSNAGKS), 60-64 (GRTQL), 80-83 (DLPG), 147-150 (TKAD), and 179-184 (AQMFSA). Residues S40 and T62 each coordinate Mg(2+).

The protein belongs to the TRAFAC class TrmE-Era-EngA-EngB-Septin-like GTPase superfamily. EngB GTPase family. Requires Mg(2+) as cofactor.

In terms of biological role, necessary for normal cell division and for the maintenance of normal septation. The polypeptide is Probable GTP-binding protein EngB (Saccharophagus degradans (strain 2-40 / ATCC 43961 / DSM 17024)).